Reading from the N-terminus, the 233-residue chain is Purine nucleoside phosphorylase DeoD-type (233 aa).

A purine D-ribonucleoside is bound at residue histidine 4. Phosphate contacts are provided by residues glycine 20, arginine 24, arginine 43, and arginine 87–threonine 90. Residues glutamate 178–glutamate 180 and serine 202–aspartate 203 contribute to the a purine D-ribonucleoside site. Aspartate 203 (proton donor) is an active-site residue.

This sequence belongs to the PNP/UDP phosphorylase family. In terms of assembly, homohexamer; trimer of homodimers.

The catalysed reaction is a purine D-ribonucleoside + phosphate = a purine nucleobase + alpha-D-ribose 1-phosphate. The enzyme catalyses a purine 2'-deoxy-D-ribonucleoside + phosphate = a purine nucleobase + 2-deoxy-alpha-D-ribose 1-phosphate. In terms of biological role, catalyzes the reversible phosphorolytic breakdown of the N-glycosidic bond in the beta-(deoxy)ribonucleoside molecules, with the formation of the corresponding free purine bases and pentose-1-phosphate. The chain is Purine nucleoside phosphorylase DeoD-type from Listeria innocua serovar 6a (strain ATCC BAA-680 / CLIP 11262).